Consider the following 710-residue polypeptide: NAD(P)H-quinone oxidoreductase subunit 5, chloroplastic (710 aa).

17 consecutive transmembrane segments (helical) span residues 9–29 (WIIPFVPLLVPMLIGAGLLIF), 40–60 (WSFQSVLLLSIVMAFSIYLSI), 89–109 (IDPLTSIMSILVTTVGILVLI), 125–145 (FTYMSFFCAAMLGLVTSSNFI), 147–167 (IYIFWELVGLCSYLLIGFWFT), 185–205 (GDFGLLLGILGFYWITGSFEF), 221–241 (VNLLFVTLCAALLFVGAIAKS), 258–278 (TPISALIHAATLVAAGIFLVA), 280–300 (LLPLFLVIPYIMYFISLIGII), 327–347 (LGYMMVALGMGSYRSALFHLI), 354–374 (ALLFLAAGSVIHSMETIIGYS), 396–416 (GAFLLGTLSLCGIPPLACFWS), 425–445 (WLYSPIFALIAWGTVGLTAFY), 519–539 (MLFPQILLCFVTFVIGFLGIP), 571–591 (FLKHTVISGGIAYCGIFIAFL), 657–676 (SFDLRIIDQIFNCFAFLSFI), and 689–709 (IPFYLFFYFFFVSIFIFLFYK).

It belongs to the complex I subunit 5 family. As to quaternary structure, NDH is composed of at least 16 different subunits, 5 of which are encoded in the nucleus.

Its subcellular location is the plastid. It is found in the chloroplast thylakoid membrane. The enzyme catalyses a plastoquinone + NADH + (n+1) H(+)(in) = a plastoquinol + NAD(+) + n H(+)(out). It catalyses the reaction a plastoquinone + NADPH + (n+1) H(+)(in) = a plastoquinol + NADP(+) + n H(+)(out). NDH shuttles electrons from NAD(P)H:plastoquinone, via FMN and iron-sulfur (Fe-S) centers, to quinones in the photosynthetic chain and possibly in a chloroplast respiratory chain. The immediate electron acceptor for the enzyme in this species is believed to be plastoquinone. Couples the redox reaction to proton translocation, and thus conserves the redox energy in a proton gradient. The protein is NAD(P)H-quinone oxidoreductase subunit 5, chloroplastic (ndhF) of Ipomoea purpurea (Common morning glory).